We begin with the raw amino-acid sequence, 299 residues long: ATP phosphoribosyltransferase (299 aa).

It belongs to the ATP phosphoribosyltransferase family. Long subfamily. As to quaternary structure, equilibrium between an active dimeric form, an inactive hexameric form and higher aggregates. Interconversion between the various forms is largely reversible and is influenced by the natural substrates and inhibitors of the enzyme. Mg(2+) is required as a cofactor.

Its subcellular location is the cytoplasm. It carries out the reaction 1-(5-phospho-beta-D-ribosyl)-ATP + diphosphate = 5-phospho-alpha-D-ribose 1-diphosphate + ATP. The protein operates within amino-acid biosynthesis; L-histidine biosynthesis; L-histidine from 5-phospho-alpha-D-ribose 1-diphosphate: step 1/9. With respect to regulation, feedback inhibited by histidine. Functionally, catalyzes the condensation of ATP and 5-phosphoribose 1-diphosphate to form N'-(5'-phosphoribosyl)-ATP (PR-ATP). Has a crucial role in the pathway because the rate of histidine biosynthesis seems to be controlled primarily by regulation of HisG enzymatic activity. The protein is ATP phosphoribosyltransferase of Salmonella dublin (strain CT_02021853).